Reading from the N-terminus, the 128-residue chain is Ribonuclease P protein component (128 aa).

The protein belongs to the RnpA family. In terms of assembly, consists of a catalytic RNA component (M1 or rnpB) and a protein subunit.

The enzyme catalyses Endonucleolytic cleavage of RNA, removing 5'-extranucleotides from tRNA precursor.. In terms of biological role, RNaseP catalyzes the removal of the 5'-leader sequence from pre-tRNA to produce the mature 5'-terminus. It can also cleave other RNA substrates such as 4.5S RNA. The protein component plays an auxiliary but essential role in vivo by binding to the 5'-leader sequence and broadening the substrate specificity of the ribozyme. The polypeptide is Ribonuclease P protein component (Methylococcus capsulatus (strain ATCC 33009 / NCIMB 11132 / Bath)).